The following is a 489-amino-acid chain: MALKLYNSLTRQEETFEPLEPNIIKMYVCGVTVYDYCHLGHARSYIAWDTMRRYLIWQGYQVRYVQNFTDIDDKILKRARETGSSMDSVAKRFTEAYFEDMKRLNVLEADEYPRATQNIDRIQNLIHDLEKKGFAYSSGGDVYYQVREFSQYGKLSGRRLEEMQAGASGRVDSEDLETAKKKDPFDFALWKAAKTGEPAWDSPWGKGRPGWHIECSAMVQDCLGETIDIHAGGADLIFPHHENEIAQSEASTGKILARYWLHNGFVTINGEKMSKSLGNFTTIRDLLDQPVDPMALRMFVLTAQYRKPIDFTEEAIASAKNGWNTIKEGILFPYQYGPKLGWEMPAKNLSDQTLLLTSYLEKFQKAMDDDINTPAALAILFELAKDLRREGNVLIHEGKTETSLEELKKQWVTLVSLSQVLGLEVKIEEQVSNISEGLSNIEIESLIQQRLEAKKAKNYSEADRIRNELQSQGIKLIDKSGGLTNWHRN.

Cys-29 serves as a coordination point for Zn(2+). A 'HIGH' region motif is present at residues 31–41 (VTVYDYCHLGH). Cys-215, His-240, and Glu-244 together coordinate Zn(2+). The 'KMSKS' region motif lies at 272-276 (KMSKS). Lys-275 provides a ligand contact to ATP.

The protein belongs to the class-I aminoacyl-tRNA synthetase family. In terms of assembly, monomer. Zn(2+) is required as a cofactor.

The protein localises to the cytoplasm. The enzyme catalyses tRNA(Cys) + L-cysteine + ATP = L-cysteinyl-tRNA(Cys) + AMP + diphosphate. The polypeptide is Cysteine--tRNA ligase (Trichodesmium erythraeum (strain IMS101)).